Reading from the N-terminus, the 338-residue chain is Heat-inducible transcription repressor HrcA (338 aa).

It belongs to the HrcA family.

Its function is as follows. Negative regulator of class I heat shock genes (grpE-dnaK-dnaJ and groELS operons). Prevents heat-shock induction of these operons. The sequence is that of Heat-inducible transcription repressor HrcA from Bacillus cereus (strain ATCC 10987 / NRS 248).